The sequence spans 374 residues: Phosphate-binding protein PstS1 (374 aa).

Positions methionine 1–glycine 23 are cleaved as a signal peptide. Residue cysteine 24 is the site of N-palmitoyl cysteine attachment. The S-diacylglycerol cysteine moiety is linked to residue cysteine 24. Residues glycine 25 to serine 48 are disordered. Residues serine 58–leucine 60, serine 88, aspartate 106, and serine 189–aspartate 191 contribute to the phosphate site.

Belongs to the PstS family. As to quaternary structure, the complex is composed of two ATP-binding proteins (PstB), two transmembrane proteins (PstC and PstA) and a solute-binding protein (PstS).

Its subcellular location is the cell membrane. The protein localises to the secreted. In terms of biological role, functions in inorganic phosphate uptake, a phosphate-binding protein, although probably not the main uptake protein under phosphate starvation. Part of the ABC transporter complex PstSACB involved in phosphate import. A host TLR2 agonist (toll-like receptor), requires both host TLR1 and TLR2 as coreceptors. In Mycobacterium bovis (strain BCG / Pasteur 1173P2), this protein is Phosphate-binding protein PstS1 (pstS1).